The sequence spans 673 residues: FLYWCH-type zinc finger-containing protein 1 (673 aa).

The segment at 1-62 (MPLPEPSEQD…SSTATLPNNT (62 aa)) is disordered. The residue at position 21 (serine 21) is a Phosphoserine. The span at 47 to 62 (VASQETSSTATLPNNT) shows a compositional bias: polar residues. 2 FLYWCH-type zinc fingers span residues 92 to 150 (FLKT…DHCH) and 235 to 293 (FLKT…SHCH). Lysine 110 participates in a covalent cross-link: Glycyl lysine isopeptide (Lys-Gly) (interchain with G-Cter in SUMO2). Positions 147 to 158 (DHCHPPEKEGLD) are enriched in basic and acidic residues. Positions 147 to 178 (DHCHPPEKEGLDRKKRHRGRPPSSALPEGAEV) are disordered. Phosphoserine is present on residues serine 294 and serine 339. The tract at residues 351-402 (LSRSKSKSKSKSRSKSKSKSRSRSRKRAKKQQESSQEPPEEDQDVDPRGPEF) is disordered. The segment covering 354-379 (SKSKSKSKSRSKSKSKSRSRSRKRAK) has biased composition (basic residues). 3 consecutive FLYWCH-type zinc fingers follow at residues 402–460 (FLKT…SHCH), 490–548 (FLKT…RHCH), and 581–639 (FLRT…SHCH). The disordered stretch occupies residues 646 to 673 (LEALRQREKAPSAAKKKKKKKKKKKGIH). Residues 659 to 673 (AKKKKKKKKKKKGIH) show a composition bias toward basic residues. Lysine 666 is covalently cross-linked (Glycyl lysine isopeptide (Lys-Gly) (interchain with G-Cter in SUMO2)).

As to quaternary structure, interacts with CTNNB1 (when unphosphorylated), perhaps preventing interaction of CTNNB1 with TCF4, and thereby regulating transcription activation; phosphorylation of CTNNB1 may inhibit the interaction.

The protein localises to the nucleus. Its subcellular location is the chromosome. It is found in the centromere. Transcription cofactor. Negatively regulates transcription activation by catenin beta-1 CTNNB1, perhaps acting by competing with TCF4 for CTNNB1 binding. May play a role in DNA-damage response signaling. Binds specifically to DNA sequences at peri-centromeric chromatin loci. In Mus musculus (Mouse), this protein is FLYWCH-type zinc finger-containing protein 1 (Flywch1).